Reading from the N-terminus, the 425-residue chain is L-lysine 2,3-aminomutase (425 aa).

In terms of domain architecture, Radical SAM core spans 113 to 325 (HRYPDRVLLL…GLRGHTSGYA (213 aa)). Cysteine 127, cysteine 131, and cysteine 134 together coordinate [4Fe-4S] cluster. Residue lysine 339 is modified to N6-(pyridoxal phosphate)lysine.

This sequence belongs to the radical SAM superfamily. KamA family. In terms of assembly, homotetramer. [4Fe-4S] cluster is required as a cofactor. The cofactor is pyridoxal 5'-phosphate.

It carries out the reaction L-lysine = (3S)-3,6-diaminohexanoate. The protein operates within amino-acid degradation; L-lysine degradation via acetate pathway. Its function is as follows. Catalyzes the interconversion of L-alpha-lysine and L-beta-lysine. The protein is L-lysine 2,3-aminomutase of Fusobacterium nucleatum subsp. nucleatum (strain ATCC 25586 / DSM 15643 / BCRC 10681 / CIP 101130 / JCM 8532 / KCTC 2640 / LMG 13131 / VPI 4355).